The chain runs to 131 residues: Ribosome-binding factor A (131 aa).

Belongs to the RbfA family. As to quaternary structure, monomer. Binds 30S ribosomal subunits, but not 50S ribosomal subunits or 70S ribosomes.

The protein resides in the cytoplasm. Its function is as follows. One of several proteins that assist in the late maturation steps of the functional core of the 30S ribosomal subunit. Associates with free 30S ribosomal subunits (but not with 30S subunits that are part of 70S ribosomes or polysomes). Required for efficient processing of 16S rRNA. May interact with the 5'-terminal helix region of 16S rRNA. This chain is Ribosome-binding factor A, found in Thermotoga maritima (strain ATCC 43589 / DSM 3109 / JCM 10099 / NBRC 100826 / MSB8).